A 91-amino-acid chain; its full sequence is Small ribosomal subunit protein uS15 (91 aa).

It belongs to the universal ribosomal protein uS15 family. As to quaternary structure, part of the 30S ribosomal subunit. Forms a bridge to the 50S subunit in the 70S ribosome, contacting the 23S rRNA.

Its function is as follows. One of the primary rRNA binding proteins, it binds directly to 16S rRNA where it helps nucleate assembly of the platform of the 30S subunit by binding and bridging several RNA helices of the 16S rRNA. Functionally, forms an intersubunit bridge (bridge B4) with the 23S rRNA of the 50S subunit in the ribosome. The sequence is that of Small ribosomal subunit protein uS15 from Synechococcus sp. (strain JA-2-3B'a(2-13)) (Cyanobacteria bacterium Yellowstone B-Prime).